The primary structure comprises 527 residues: Optineurin (527 aa).

2 disordered regions span residues 1–32 and 101–143; these read MSHQ…HPNL and SHEN…KDQL. The stretch at 38 to 170 forms a coiled coil; it reads EELLQQMKEL…VSELQLKLNS (133 aa). The tract at residues 58 to 209 is interaction with Rab8; the sequence is MKLNNQAMKG…GPTRTVSTSR (152 aa). The short motif at 176–181 is the LIR element; sequence DSFVEI. At S177 the chain carries Phosphoserine; by TBK1. The span at 186–197 shows a compositional bias: basic and acidic residues; sequence GEAEGSVKEIKH. Disordered regions lie at residues 186-214 and 262-292; these read GEAE…LSKY and SDFE…EKGL. The residue at position 198 (S198) is a Phosphoserine. Polar residues predominate over residues 201-210; it reads PTRTVSTSRA. The stretch at 239-458 forms a coiled coil; that stretch reads CLREGNQKVE…LLKENDAFED (220 aa). Composition is skewed to basic and acidic residues over residues 262-274 and 281-292; these read SDFE…RSEI and STEKENDEEKGL. The interaction with HD stretch occupies residues 361 to 527; sequence TRKESEKVDR…LQIHVMDCII (167 aa). The interaction with MYO6 stretch occupies residues 362–470; sequence RKESEKVDRA…RQSLMEMQSR (109 aa). A UBAN motif is present at residues 424-429; sequence DFHAER. Residue S476 is modified to Phosphoserine. Residues 497–527 form a CCHC NOA-type zinc finger; it reads QRNIPIHSCPKCGEVLPDIDTLQIHVMDCII. Zn(2+)-binding residues include C505, C508, H521, and C525.

Self-associates. Interacts with HD. Interacts with GTF3A. Interacts with MYO6. Interacts (via UBAN) with ubiquitinated TFRC. Interacts with GTP-bound Rab8 (RAB8A and/or RAB8B). Interacts with TBC1D17. Interacts with TBK1. Interacts with TRAF3. Binds to linear ubiquitin chains. Interacts with LC3 family members MAP1LC3A, MAP1LC3B, GABARAP, GABARAPL1 and GABARAPL2; OPTN phosphorylation increases the association (at least with MAP1LC3B). Interacts with RAB12; the interaction may be indirect. Interacts with TBK1; this interaction leads to the Golgi localization of TBK1 and its subsequent activation. Interacts with palmitoyltransferase ZDHHC17/HIP14; the interaction does not lead to palmitoylation of OPTN. Interacts with CYLD. Interacts with TOM1; the interaction is indirect and is mediated by MYO6, which acts as a bridge between TOM1 and OPTN. Interacts with USP12; the interaction is independent of USP12 deubiquitinase activity and may be involved in regulation of autophagic flux. Phosphorylated by TBK1, leading to restrict bacterial proliferation in case of infection.

It localises to the cytoplasm. It is found in the perinuclear region. The protein resides in the golgi apparatus. Its subcellular location is the trans-Golgi network. The protein localises to the cytoplasmic vesicle. It localises to the autophagosome. It is found in the recycling endosome. Its function is as follows. Plays an important role in the maintenance of the Golgi complex, in membrane trafficking, in exocytosis, through its interaction with myosin VI and Rab8. Links myosin VI to the Golgi complex and plays an important role in Golgi ribbon formation. Negatively regulates the induction of IFNB in response to RNA virus infection. Plays a neuroprotective role in the eye and optic nerve. Probably part of the TNF-alpha signaling pathway that can shift the equilibrium toward induction of cell death. May act by regulating membrane trafficking and cellular morphogenesis via a complex that contains Rab8 and huntingtin (HD). Mediates the interaction of Rab8 with the probable GTPase-activating protein TBC1D17 during Rab8-mediated endocytic trafficking, such as that of transferrin receptor (TFRC/TfR); regulates Rab8 recruitment to tubules emanating from the endocytic recycling compartment. Autophagy receptor that interacts directly with both the cargo to become degraded and an autophagy modifier of the MAP1 LC3 family; targets ubiquitin-coated bacteria (xenophagy) and appears to function in the same pathway as SQSTM1 and CALCOCO2/NDP52. This Pongo abelii (Sumatran orangutan) protein is Optineurin (OPTN).